Reading from the N-terminus, the 282-residue chain is tRNA N(3)-cytidine methyltransferase METTL6 (282 aa).

7 residues coordinate S-adenosyl-L-methionine: W45, Y49, G87, D110, D136, L137, and I157.

This sequence belongs to the methyltransferase superfamily. METL family. In terms of assembly, monomer. Interacts with SARS1/SerRS; interaction is mediated via tRNA(Ser) and is required for N(3)-methylcytidine methylation.

It is found in the cytoplasm. The protein resides in the nucleus. It carries out the reaction cytidine(32) in tRNA(Ser) + S-adenosyl-L-methionine = N(3)-methylcytidine(32) in tRNA(Ser) + S-adenosyl-L-homocysteine + H(+). Functionally, S-adenosyl-L-methionine-dependent methyltransferase that mediates N(3)-methylcytidine modification of residue 32 of the tRNA anticodon loop of tRNA(Ser), including tRNA(Ser)(UGA) and tRNA(Ser)(GCU). Interaction with SARS1/SerRS is required for N(3)-methylcytidine methylation. The protein is tRNA N(3)-cytidine methyltransferase METTL6 of Mus musculus (Mouse).